A 346-amino-acid polypeptide reads, in one-letter code: Golgi-associated RAB2 interactor protein 2 (346 aa).

Residues 275 to 346 are disordered; that stretch reads TPVESEANTS…EKHVRQPKDF (72 aa). 2 stretches are compositionally biased toward basic and acidic residues: residues 283 to 297 and 334 to 346; these read TSKE…EKTP and KLVE…PKDF.

The protein belongs to the GARIN family. In terms of assembly, interacts with CALM1.

It localises to the cell projection. Its subcellular location is the cilium. The protein localises to the flagellum. Seems to play a role in sperm motility. The protein is Golgi-associated RAB2 interactor protein 2 (GARIN2) of Macaca fascicularis (Crab-eating macaque).